We begin with the raw amino-acid sequence, 120 residues long: Glycine cleavage system H protein (120 aa).

Residues 17 to 99 enclose the Lipoyl-binding domain; it reads IATVGITSHA…QGAGWLYRMR (83 aa). K58 carries the N6-lipoyllysine modification.

Belongs to the GcvH family. As to quaternary structure, the glycine cleavage system is composed of four proteins: P, T, L and H. It depends on (R)-lipoate as a cofactor.

The glycine cleavage system catalyzes the degradation of glycine. The H protein shuttles the methylamine group of glycine from the P protein to the T protein. In Methylobacterium nodulans (strain LMG 21967 / CNCM I-2342 / ORS 2060), this protein is Glycine cleavage system H protein.